The following is a 256-amino-acid chain: Imidazole glycerol phosphate synthase subunit HisF (256 aa).

Active-site residues include Asp-12 and Asp-131.

This sequence belongs to the HisA/HisF family. Heterodimer of HisH and HisF.

The protein localises to the cytoplasm. It catalyses the reaction 5-[(5-phospho-1-deoxy-D-ribulos-1-ylimino)methylamino]-1-(5-phospho-beta-D-ribosyl)imidazole-4-carboxamide + L-glutamine = D-erythro-1-(imidazol-4-yl)glycerol 3-phosphate + 5-amino-1-(5-phospho-beta-D-ribosyl)imidazole-4-carboxamide + L-glutamate + H(+). The protein operates within amino-acid biosynthesis; L-histidine biosynthesis; L-histidine from 5-phospho-alpha-D-ribose 1-diphosphate: step 5/9. Functionally, IGPS catalyzes the conversion of PRFAR and glutamine to IGP, AICAR and glutamate. The HisF subunit catalyzes the cyclization activity that produces IGP and AICAR from PRFAR using the ammonia provided by the HisH subunit. In Azotobacter vinelandii (strain DJ / ATCC BAA-1303), this protein is Imidazole glycerol phosphate synthase subunit HisF.